The primary structure comprises 369 residues: Peptide chain release factor 1 (369 aa).

Gln-234 bears the N5-methylglutamine mark.

This sequence belongs to the prokaryotic/mitochondrial release factor family. Methylated by PrmC. Methylation increases the termination efficiency of RF1.

The protein resides in the cytoplasm. In terms of biological role, peptide chain release factor 1 directs the termination of translation in response to the peptide chain termination codons UAG and UAA. The chain is Peptide chain release factor 1 from Kocuria rhizophila (strain ATCC 9341 / DSM 348 / NBRC 103217 / DC2201).